A 303-amino-acid polypeptide reads, in one-letter code: 3-methyl-2-oxobutanoate hydroxymethyltransferase (303 aa).

Residues 1–10 (MDSSGTVRNQ) show a composition bias toward polar residues. The tract at residues 1 to 41 (MDSSGTVRNQTSDDHSRPADAAGTAATLYGAPAETRSPRRS) is disordered. Mg(2+) contacts are provided by D84 and D123. 3-methyl-2-oxobutanoate-binding positions include 84-85 (DS), D123, and K153. E155 contacts Mg(2+). Catalysis depends on E221, which acts as the Proton acceptor.

Belongs to the PanB family. Homodecamer; pentamer of dimers. Requires Mg(2+) as cofactor.

The protein localises to the cytoplasm. The catalysed reaction is 3-methyl-2-oxobutanoate + (6R)-5,10-methylene-5,6,7,8-tetrahydrofolate + H2O = 2-dehydropantoate + (6S)-5,6,7,8-tetrahydrofolate. It participates in cofactor biosynthesis; (R)-pantothenate biosynthesis; (R)-pantoate from 3-methyl-2-oxobutanoate: step 1/2. Its function is as follows. Catalyzes the reversible reaction in which hydroxymethyl group from 5,10-methylenetetrahydrofolate is transferred onto alpha-ketoisovalerate to form ketopantoate. This is 3-methyl-2-oxobutanoate hydroxymethyltransferase from Frankia alni (strain DSM 45986 / CECT 9034 / ACN14a).